Here is a 1568-residue protein sequence, read N- to C-terminus: Myosin-2 (1568 aa).

Residues 4–57 enclose the Myosin N-terminal SH3-like domain; sequence EVGTRCWYPHKELGWIGAEVIKNEVKDGKYHLELSLEDDEVVSVDTEDLNDDKN. The 714-residue stretch at 70–783 folds into the Myosin motor domain; sequence EATEDLTSLS…MLAYLEKLRS (714 aa). Position 164–171 (164–171) interacts with ATP; sequence GESGAGKT. The segment at 443–523 is actin-binding; it reads FIGVLDIYGF…LGILSLLDEE (81 aa). A disordered region spans residues 619-641; the sequence is KKAELEQNNPGNKKPGPARTVNR. 6 IQ domains span residues 786–808, 809–833, 834–856, 857–881, 882–904, and 905–934; these read MHNSIVTIQKKIRAKYYRNQYLK, ISQAIKIWQSNTRGFIIRHRVYHEM, KVHSATLIQATYRGYAIRKNVFN, VLITIINLQTRIREELKRKQLKREH, EYNAAVTIQSKVRTFEPRSTFLN, and TKRDTVVVQSLIRRRAAQGRLRQLKSDAKS. Residues 944–1088 are a coiled coil; that stretch reads KLENKVIELT…ISRLQTAMSL (145 aa). Residues 1089–1568 are non alpha-helical, tail domain; that stretch reads GTVTTSVLPQ…VAQQVVQDGH (480 aa). In terms of domain architecture, Dilute spans 1223–1498; that stretch reads AQVLTTIQKV…LRYVADIVKK (276 aa).

This sequence belongs to the TRAFAC class myosin-kinesin ATPase superfamily. Myosin family. In terms of assembly, homodimer. Interacts with calmodulin (CMD1) and the myosin light chain MLC1 through its IQ repeats.

In terms of biological role, myosin heavy chain that is required for the cell cycle-regulated transport of various organelles and proteins for their segregation. Functions by binding with its tail domain to receptor proteins on organelles and exerting force with its N-terminal motor domain against actin filaments, thereby transporting its cargo along polarized actin cables. This is Myosin-2 (MYO2) from Saccharomyces uvarum (strain ATCC 76518 / CBS 7001 / CLIB 283 / NBRC 10550 / MCYC 623 / NCYC 2669 / NRRL Y-11845) (Yeast).